Reading from the N-terminus, the 1531-residue chain is Nuclear factor of activated T-cells 5 (1531 aa).

Disordered stretches follow at residues 34 to 89 (ELQL…TSSS) and 114 to 141 (VSNR…RHTV). The span at 41-51 (RETSVASMSQT) shows a compositional bias: polar residues. A compositionally biased stretch (low complexity) spans 63 to 89 (VVAADASSAPSSSSMGGACSSFTTSSS). Residue serine 120 is modified to Phosphoserine. Lysine 122 is subject to N6-acetyllysine. Positions 122-134 (KQLTSNTVQQHPS) are enriched in polar residues. Serine 134 carries the post-translational modification Phosphoserine. At threonine 135 the chain carries Phosphothreonine; by CDK5. Serine 155 is subject to Phosphoserine. 2 disordered regions span residues 175 to 220 (WMED…CEES) and 241 to 265 (TTDN…GVKK). Over residues 179–192 (SPSNFSNMSTSSYN) the composition is skewed to low complexity. A compositionally biased stretch (basic residues) spans 200-212 (KSRKRNPKQRPGV). Residues 241–260 (TTDNKGNSKAGNGTLENQKG) are compositionally biased toward polar residues. Positions 264 to 443 (KKSPMLCGQY…SPILCTQPAG (180 aa)) constitute an RHD domain. Residues 293–300 (RARYLTEG) mediate DNA binding. A Glycyl lysine isopeptide (Lys-Gly) (interchain with G-Cter in SUMO1); alternate cross-link involves residue lysine 556. Lysine 556 is covalently cross-linked (Glycyl lysine isopeptide (Lys-Gly) (interchain with G-Cter in SUMO2); alternate). Serine 561 bears the Phosphoserine mark. Residues lysine 573 and lysine 603 each participate in a glycyl lysine isopeptide (Lys-Gly) (interchain with G-Cter in SUMO2) cross-link. Disordered regions lie at residues 640-666 (NIAG…QQIQ), 841-891 (VSPG…QVME), 958-996 (PPAV…TGTQ), 1211-1304 (PQVA…QEQQ), 1316-1371 (APMN…QEQQ), and 1473-1502 (ISQP…SPLA). Positions 646–656 (SFSSPSSSHLP) are enriched in low complexity. Polar residues-rich tracts occupy residues 841–852 (VSPGMFSSTEPT) and 869–878 (HPQSENTLSN). Composition is skewed to low complexity over residues 879 to 888 (QQQQQQQQQQ) and 960 to 980 (AVSG…PGTT). Composition is skewed to polar residues over residues 981–996 (MFQT…TGTQ) and 1224–1247 (PQSQ…NSPS). The span at 1248–1266 (QEQQQQQQQQQQQQQQQQQ) shows a compositional bias: low complexity. Polar residues-rich tracts occupy residues 1267–1278 (SILFSNQNTMAT) and 1291–1304 (FNPN…QEQQ). Low complexity predominate over residues 1320-1330 (QEQQPMQFQSQ). Over residues 1331–1371 (STVSSLQNPGPTQSESSQTPLFHSSPQIQLVQGSPSSQEQQ) the composition is skewed to polar residues. The span at 1475–1486 (QPGQPQNEGQPP) shows a compositional bias: low complexity. Residues 1487-1502 (VTTLLSQQMPENSPLA) are compositionally biased toward polar residues.

Homodimer when bound to DNA, completely encircles its DNA target. Interacts with CIDEC; this interaction is direct and retains NFAT5 in the cytoplasm. Does not bind with Fos and Jun transcription factors. Interacts with DDX5 and DDX17; this interaction leads to DDX5/DDX17 recruitment to LNC2 and S100A4 promoters and NFAT5-mediated DDX5/DDX17-enhanced transactivation. In terms of processing, phosphorylated. Phosphorylated at Thr-135 by CDK5 in response to osmotic stress; this phosphorylation mediates its rapid nuclear localization. Poly-ADP-ribosylated by PARP1 in response to DNA damage, promoting recruitment to sites of R-loop-associated DNA damage. As to expression, widely expressed, with highest levels in skeletal muscle, brain, heart and peripheral blood leukocytes.

It is found in the nucleus. The protein resides in the cytoplasm. Its subcellular location is the chromosome. Its function is as follows. Transcription factor involved, among others, in the transcriptional regulation of osmoprotective and inflammatory genes. Binds the DNA consensus sequence 5'-[ACT][AG]TGGAAA[CAT]A[TA][ATC][CA][ATG][GT][GAC][CG][CT]-3'. Mediates the transcriptional response to hypertonicity. Positively regulates the transcription of LCN2 and S100A4 genes; optimal transactivation of these genes requires the presence of DDX5/DDX17. Also involved in the DNA damage response by preventing formation of R-loops; R-loops are composed of a DNA:RNA hybrid and the associated non-template single-stranded DNA. This chain is Nuclear factor of activated T-cells 5, found in Homo sapiens (Human).